We begin with the raw amino-acid sequence, 621 residues long: Putative 5'-3' exonuclease R528 (621 aa).

It belongs to the 5'-3' exonuclease family.

Its subcellular location is the virion. This Acanthamoeba polyphaga mimivirus (APMV) protein is Putative 5'-3' exonuclease R528.